Reading from the N-terminus, the 697-residue chain is Protein Niban 3 (697 aa).

The disordered stretch occupies residues 1–48 (MGPDRKEVPLSRGTQAVVVGKGRGAPGDDSSMGGRPSSPLDKQQRQHL).

The protein belongs to the Niban family. In terms of tissue distribution, specifically expressed in B-lymphocytes.

The polypeptide is Protein Niban 3 (Homo sapiens (Human)).